We begin with the raw amino-acid sequence, 505 residues long: Catalase (505 aa).

The interval 1–25 is disordered; the sequence is MSRQDKKLTGVFGHPVSDRENSMTA. Active-site residues include His-56 and Asn-129. Residue Tyr-339 coordinates heme.

This sequence belongs to the catalase family. As to quaternary structure, homodimer. Heme serves as cofactor.

It catalyses the reaction 2 H2O2 = O2 + 2 H2O. Functionally, decomposes hydrogen peroxide into water and oxygen; serves to protect cells from the toxic effects of hydrogen peroxide. The chain is Catalase (katA) from Staphylococcus aureus (strain MRSA252).